The following is an 888-amino-acid chain: Alanine--tRNA ligase (888 aa).

Residues His564, His568, Cys676, and His680 each contribute to the Zn(2+) site.

The protein belongs to the class-II aminoacyl-tRNA synthetase family. The cofactor is Zn(2+).

It localises to the cytoplasm. The enzyme catalyses tRNA(Ala) + L-alanine + ATP = L-alanyl-tRNA(Ala) + AMP + diphosphate. In terms of biological role, catalyzes the attachment of alanine to tRNA(Ala) in a two-step reaction: alanine is first activated by ATP to form Ala-AMP and then transferred to the acceptor end of tRNA(Ala). Also edits incorrectly charged Ser-tRNA(Ala) and Gly-tRNA(Ala) via its editing domain. The chain is Alanine--tRNA ligase from Bartonella tribocorum (strain CIP 105476 / IBS 506).